A 477-amino-acid chain; its full sequence is Ribulose bisphosphate carboxylase large chain (477 aa).

Residues 1–2 (MS) constitute a propeptide that is removed on maturation. An N-acetylproline modification is found at Pro3. Lys14 is subject to N6,N6,N6-trimethyllysine. Asn123 and Thr173 together coordinate substrate. The Proton acceptor role is filled by Lys175. Residue Lys177 participates in substrate binding. 3 residues coordinate Mg(2+): Lys201, Asp203, and Glu204. An N6-carboxylysine modification is found at Lys201. His294 (proton acceptor) is an active-site residue. Positions 295, 327, and 379 each coordinate substrate.

The protein belongs to the RuBisCO large chain family. Type I subfamily. In terms of assembly, heterohexadecamer of 8 large chains and 8 small chains; disulfide-linked. The disulfide link is formed within the large subunit homodimers. The cofactor is Mg(2+). Post-translationally, the disulfide bond which can form in the large chain dimeric partners within the hexadecamer appears to be associated with oxidative stress and protein turnover.

The protein resides in the plastid. It is found in the chloroplast. The catalysed reaction is 2 (2R)-3-phosphoglycerate + 2 H(+) = D-ribulose 1,5-bisphosphate + CO2 + H2O. It carries out the reaction D-ribulose 1,5-bisphosphate + O2 = 2-phosphoglycolate + (2R)-3-phosphoglycerate + 2 H(+). Functionally, ruBisCO catalyzes two reactions: the carboxylation of D-ribulose 1,5-bisphosphate, the primary event in carbon dioxide fixation, as well as the oxidative fragmentation of the pentose substrate in the photorespiration process. Both reactions occur simultaneously and in competition at the same active site. This Digitalis purpurea (Common foxglove) protein is Ribulose bisphosphate carboxylase large chain.